Consider the following 540-residue polypeptide: Chaperonin GroEL (540 aa).

Residues 30–33, Lys51, 87–91, Gly415, 479–481, and Asp495 each bind ATP; these read TLGP, DGTTT, and NAA.

Belongs to the chaperonin (HSP60) family. In terms of assembly, forms a cylinder of 14 subunits composed of two heptameric rings stacked back-to-back. Interacts with the co-chaperonin GroES.

The protein resides in the cytoplasm. The catalysed reaction is ATP + H2O + a folded polypeptide = ADP + phosphate + an unfolded polypeptide.. In terms of biological role, together with its co-chaperonin GroES, plays an essential role in assisting protein folding. The GroEL-GroES system forms a nano-cage that allows encapsulation of the non-native substrate proteins and provides a physical environment optimized to promote and accelerate protein folding. This chain is Chaperonin GroEL, found in Pectobacterium carotovorum subsp. carotovorum (Erwinia carotovora subsp. carotovora).